We begin with the raw amino-acid sequence, 541 residues long: Calcium-dependent protein kinase 26 (541 aa).

Gly residues predominate over residues 1–11; that stretch reads MGQCCTGGGKA. The segment at 1–74 is disordered; it reads MGQCCTGGGK…AGPIGEVLER (74 aa). G2 carries N-myristoyl glycine lipidation. Over residues 38–67 the composition is skewed to low complexity; it reads AKQQPCSPAAKAAATEAAAAASSSKKPAGP. The Protein kinase domain occupies 83-341; sequence YSIGKELGRG…AFQVLNHPWI (259 aa). ATP is bound by residues 89 to 97 and K112; that span reads LGRGQFGVT. Catalysis depends on D207, which acts as the Proton acceptor. Residues 347–377 form an autoinhibitory domain region; the sequence is APDVPLDNVVLNRLKQFRAMNQFKKAALRII. EF-hand domains are found at residues 384–419, 420–455, 456–491, and 493–526; these read EEIK…QGTK, FSDN…MNKM, DREE…QGLY, and ANEI…GSGC. Ca(2+) is bound by residues D397, D399, S401, T403, E408, D433, D435, N437, E444, D469, D471, S473, Y475, E480, D504, N506, D508, R510, and E515.

Belongs to the protein kinase superfamily. Ser/Thr protein kinase family. CDPK subfamily. Specifically expressed in heading panicles, spikelets and mature pollen grains. Not expressed in vegetative tissues.

The protein resides in the membrane. It catalyses the reaction L-seryl-[protein] + ATP = O-phospho-L-seryl-[protein] + ADP + H(+). The enzyme catalyses L-threonyl-[protein] + ATP = O-phospho-L-threonyl-[protein] + ADP + H(+). Activated by calcium. Autophosphorylation may play an important role in the regulation of the kinase activity. May play a role in signal transduction pathways that involve calcium as a second messenger. The chain is Calcium-dependent protein kinase 26 from Oryza sativa subsp. japonica (Rice).